The sequence spans 894 residues: Sorting nexin-14 (894 aa).

A PXA domain is found at 78–252 (SSKVDASLSE…LLIIFIDDSP (175 aa)). The RGS domain maps to 284-416 (ELKQIREQQD…CHSDEYFRQL (133 aa)). S496 is modified (phosphoserine). Positions 518 to 638 (PYVDFFEDPS…DFLSPNGGET (121 aa)) constitute a PX domain.

This sequence belongs to the sorting nexin family.

The protein resides in the cytoplasm. The protein localises to the cell projection. Its subcellular location is the dendrite. Plays a role in maintaining normal neuronal excitability and synaptic transmission. May be involved in several stages of intracellular trafficking. In Pongo abelii (Sumatran orangutan), this protein is Sorting nexin-14 (SNX14).